The following is a 143-amino-acid chain: Large ribosomal subunit protein uL11 (143 aa).

This sequence belongs to the universal ribosomal protein uL11 family. In terms of assembly, part of the ribosomal stalk of the 50S ribosomal subunit. Interacts with L10 and the large rRNA to form the base of the stalk. L10 forms an elongated spine to which L12 dimers bind in a sequential fashion forming a multimeric L10(L12)X complex. Post-translationally, one or more lysine residues are methylated.

Forms part of the ribosomal stalk which helps the ribosome interact with GTP-bound translation factors. This chain is Large ribosomal subunit protein uL11, found in Kocuria rhizophila (strain ATCC 9341 / DSM 348 / NBRC 103217 / DC2201).